The sequence spans 186 residues: Peptidyl-tRNA hydrolase (186 aa).

Residue Tyr-14 participates in tRNA binding. The Proton acceptor role is filled by His-19. 3 residues coordinate tRNA: Tyr-61, Asn-63, and Asn-107.

Belongs to the PTH family. In terms of assembly, monomer.

Its subcellular location is the cytoplasm. The enzyme catalyses an N-acyl-L-alpha-aminoacyl-tRNA + H2O = an N-acyl-L-amino acid + a tRNA + H(+). Functionally, hydrolyzes ribosome-free peptidyl-tRNAs (with 1 or more amino acids incorporated), which drop off the ribosome during protein synthesis, or as a result of ribosome stalling. Catalyzes the release of premature peptidyl moieties from peptidyl-tRNA molecules trapped in stalled 50S ribosomal subunits, and thus maintains levels of free tRNAs and 50S ribosomes. The polypeptide is Peptidyl-tRNA hydrolase (Helicobacter pylori (strain P12)).